The chain runs to 127 residues: Transcription antitermination protein NusB (127 aa).

The protein belongs to the NusB family.

Involved in transcription antitermination. Required for transcription of ribosomal RNA (rRNA) genes. Binds specifically to the boxA antiterminator sequence of the ribosomal RNA (rrn) operons. The chain is Transcription antitermination protein NusB from Lysinibacillus sphaericus (strain C3-41).